A 261-amino-acid polypeptide reads, in one-letter code: uncharacterized protein (261 aa).

Residues isoleucine 33, lysine 60, aspartate 78, and asparagine 105 each coordinate NADP(+). Serine 157 serves as the catalytic Proton donor. Positions 172, 176, and 206 each coordinate NADP(+). The Proton acceptor role is filled by tyrosine 172. Residue lysine 176 is the Lowers pKa of active site Tyr of the active site.

This sequence belongs to the short-chain dehydrogenases/reductases (SDR) family.

The protein resides in the cytoplasm. It localises to the nucleus. This is an uncharacterized protein from Schizosaccharomyces pombe (strain 972 / ATCC 24843) (Fission yeast).